The primary structure comprises 148 residues: MLSNAKLLLSLAMASTALGLVSNSSSSVIVVPSSDATIAGNDTATPAPEPSSAAPIFYNSTATATQYEVVSEFTTYCPEPTTFVTNGATFTVTAPTTLTITNCPCTIEKPTSETSVSSTHDVETNSNAANARAIPGALGLAGAVMMLL.

Positions 1–19 (MLSNAKLLLSLAMASTALG) are cleaved as a signal peptide. 2 N-linked (GlcNAc...) asparagine glycosylation sites follow: asparagine 41 and asparagine 59. The GPI-anchor amidated asparagine moiety is linked to residue asparagine 127. A propeptide spans 128-148 (AANARAIPGALGLAGAVMMLL) (removed in mature form).

This sequence belongs to the SED1 family. The GPI-anchor is attached to the protein in the endoplasmic reticulum and serves to target the protein to the cell surface. There, the glucosamine-inositol phospholipid moiety is cleaved off and the GPI-modified mannoprotein is covalently attached via its lipidless GPI glycan remnant to the 1,6-beta-glucan of the outer cell wall layer.

The protein localises to the secreted. Its subcellular location is the cell wall. It is found in the membrane. Functionally, cell wall protein that plays a role in adaptation and resistance to cell wall stress. This is an uncharacterized protein from Saccharomyces cerevisiae (strain ATCC 204508 / S288c) (Baker's yeast).